Consider the following 269-residue polypeptide: Zinc import ATP-binding protein ZnuC (269 aa).

The region spanning Val6–Asp221 is the ABC transporter domain. Residue Gly38 to Thr45 participates in ATP binding.

Belongs to the ABC transporter superfamily. Zinc importer (TC 3.A.1.15.5) family. The complex is composed of two ATP-binding proteins (ZnuC), two transmembrane proteins (ZnuB) and a solute-binding protein (ZnuA).

The protein localises to the cell inner membrane. The catalysed reaction is Zn(2+)(out) + ATP(in) + H2O(in) = Zn(2+)(in) + ADP(in) + phosphate(in) + H(+)(in). Its function is as follows. Part of the ABC transporter complex ZnuABC involved in zinc import. Responsible for energy coupling to the transport system. This Pseudomonas aeruginosa (strain UCBPP-PA14) protein is Zinc import ATP-binding protein ZnuC.